A 292-amino-acid chain; its full sequence is NAD kinase (292 aa).

The active-site Proton acceptor is the D73. NAD(+) is bound by residues 73-74 (DG), 147-148 (NE), H158, R175, D177, 188-193 (TAYSLS), and Q247.

Belongs to the NAD kinase family. A divalent metal cation serves as cofactor.

Its subcellular location is the cytoplasm. It catalyses the reaction NAD(+) + ATP = ADP + NADP(+) + H(+). Its function is as follows. Involved in the regulation of the intracellular balance of NAD and NADP, and is a key enzyme in the biosynthesis of NADP. Catalyzes specifically the phosphorylation on 2'-hydroxyl of the adenosine moiety of NAD to yield NADP. In Sodalis glossinidius (strain morsitans), this protein is NAD kinase.